A 694-amino-acid chain; its full sequence is Junctophilin-2 (694 aa).

At 1–672 (MSGGRFDFDD…EVEVEEVPNT (672 aa)) the chain is on the cytoplasmic side. MORN repeat units follow at residues 14 to 36 (YCGG…KGQG), 38 to 59 (YSGS…SGNT), 60 to 79 (FEGY…TKGR), 82 to 104 (YKGE…SSGA), 106 to 128 (YEGT…DGGT), and 129 to 151 (YQGQ…PYGM). A phosphoserine mark is found at Ser162 and Ser165. Disordered stretches follow at residues 164 to 192 (SSLR…ALPS) and 231 to 278 (RAES…AAPF). Residues 176 to 189 (APDSPASPAADGPA) are compositionally biased toward low complexity. Residues 235–244 (RTSVGSQRSR) are compositionally biased toward polar residues. Residues 250–267 (SDLSSGASDAASTASLGE) are compositionally biased toward low complexity. MORN repeat units follow at residues 290–312 (YMGE…SGLR) and 313–335 (YEGE…DGHR). A Bipartite nuclear localization signal motif is present at residues 350–364 (KRRVLPLKSNKVRQK). Residues Ser445, Ser447, and Ser466 each carry the phosphoserine modification. The segment at 448-663 (LLEPPDRGAA…KEAAQAAEAE (216 aa)) is disordered. Residues 467-476 (PQLHERETPR) are compositionally biased toward basic and acidic residues. Thr474 is subject to Phosphothreonine. The span at 478-491 (EGGPPSPAGTPPQP) shows a compositional bias: pro residues. Residue Ser483 is modified to Phosphoserine. Thr487 is subject to Phosphothreonine. A Nuclear localization signal motif is present at residues 492-496 (KRPRP). Over residues 522–540 (SRPATPAAAGAGRRSPARP) the composition is skewed to low complexity. A phosphoserine mark is found at Ser536, Ser542, Ser596, and Ser600. The segment covering 589–610 (PEAADPDSAPASPATAPGQAPA) has biased composition (low complexity). The chain crosses the membrane as a helical; Anchor for type IV membrane protein span at residues 673–693 (VLICMVILLNIGLAILFVHLL).

This sequence belongs to the junctophilin family. As to quaternary structure, interacts with TRPC3. Interacts with BAG5 and HSPA8; the interaction with HSPA8 is increased in the presence of BAG5. Junctophilin-2 N-terminal fragment: Interacts with MEF2C. Proteolytically cleaved by calpain in response to cardiac stress. The major cleavage site takes place at the C-terminus and leads to the release of the Junctophilin-2 N-terminal fragment chain (JP2NT). In terms of processing, phosphorylation on Ser-165, probably by PKC, affects RYR1-mediated calcium ion release, interaction with TRPC3, and skeletal muscle myotubule development.

The protein resides in the cell membrane. It is found in the sarcoplasmic reticulum membrane. Its subcellular location is the endoplasmic reticulum membrane. The protein localises to the nucleus. In terms of biological role, membrane-binding protein that provides a structural bridge between the plasma membrane and the sarcoplasmic reticulum and is required for normal excitation-contraction coupling in cardiomyocytes. Provides a structural foundation for functional cross-talk between the cell surface and intracellular Ca(2+) release channels by maintaining the 12-15 nm gap between the sarcolemma and the sarcoplasmic reticulum membranes in the cardiac dyads. Necessary for proper intracellular Ca(2+) signaling in cardiac myocytes via its involvement in ryanodine receptor-mediated calcium ion release. Contributes to the construction of skeletal muscle triad junctions. Functionally, transcription repressor required to safeguard against the deleterious effects of cardiac stress. Generated following cleavage of the Junctophilin-2 chain by calpain in response to cardiac stress in cardiomyocytes. Following cleavage and release from the membrane, translocates to the nucleus, binds DNA and represses expression of genes implicated in cell growth and differentiation, hypertrophy, inflammation and fibrosis. Modifies the transcription profile and thereby attenuates pathological remodeling in response to cardiac stress. Probably acts by competing with MEF2 transcription factors and TATA-binding proteins. This Oryctolagus cuniculus (Rabbit) protein is Junctophilin-2 (JPH2).